Reading from the N-terminus, the 210-residue chain is dTTP/UTP pyrophosphatase (210 aa).

The active-site Proton acceptor is the Asp89.

Belongs to the Maf family. YhdE subfamily. The cofactor is a divalent metal cation.

The protein localises to the cytoplasm. The catalysed reaction is dTTP + H2O = dTMP + diphosphate + H(+). It carries out the reaction UTP + H2O = UMP + diphosphate + H(+). Nucleoside triphosphate pyrophosphatase that hydrolyzes dTTP and UTP. May have a dual role in cell division arrest and in preventing the incorporation of modified nucleotides into cellular nucleic acids. The sequence is that of dTTP/UTP pyrophosphatase from Burkholderia thailandensis (strain ATCC 700388 / DSM 13276 / CCUG 48851 / CIP 106301 / E264).